We begin with the raw amino-acid sequence, 88 residues long: ATP synthase subunit 9, mitochondrial (88 aa).

2 helical membrane passes run 30–50 (IGLTGAGAGVGIVFAAFILAV) and 66–86 (LGFALSEAVGLLALMMSFLIL).

Belongs to the ATPase C chain family. F-type ATPases have 2 components, CF(1) - the catalytic core - and CF(0) - the membrane proton channel. CF(1) has five subunits: alpha(3), beta(3), gamma(1), delta(1), epsilon(1). CF(0) has three main subunits: a, b and c.

It localises to the mitochondrion membrane. Mitochondrial membrane ATP synthase (F(1)F(0) ATP synthase or Complex V) produces ATP from ADP in the presence of a proton gradient across the membrane which is generated by electron transport complexes of the respiratory chain. F-type ATPases consist of two structural domains, F(1) - containing the extramembraneous catalytic core and F(0) - containing the membrane proton channel, linked together by a central stalk and a peripheral stalk. During catalysis, ATP synthesis in the catalytic domain of F(1) is coupled via a rotary mechanism of the central stalk subunits to proton translocation. Part of the complex F(0) domain. A homomeric c-ring of probably 10 subunits is part of the complex rotary element. This chain is ATP synthase subunit 9, mitochondrial (atp9), found in Dictyostelium citrinum (Slime mold).